Reading from the N-terminus, the 241-residue chain is Uracil-DNA glycosylase (241 aa).

D68 (proton acceptor) is an active-site residue.

It belongs to the uracil-DNA glycosylase (UDG) superfamily. UNG family.

The protein resides in the cytoplasm. The catalysed reaction is Hydrolyzes single-stranded DNA or mismatched double-stranded DNA and polynucleotides, releasing free uracil.. Its function is as follows. Excises uracil residues from the DNA which can arise as a result of misincorporation of dUMP residues by DNA polymerase or due to deamination of cytosine. This Sinorhizobium medicae (strain WSM419) (Ensifer medicae) protein is Uracil-DNA glycosylase.